A 542-amino-acid polypeptide reads, in one-letter code: Pre-mRNA-splicing factor 38B (542 aa).

Over residues 1 to 12 (MANNSPALTGNS) the composition is skewed to polar residues. The disordered stretch occupies residues 1 to 41 (MANNSPALTGNSQPQHQAAAAVTQQQQQCGGGGGATKPAVS). Alanine 2 carries the N-acetylalanine modification. Serine 5 is subject to Phosphoserine. Over residues 13 to 28 (QPQHQAAAAVTQQQQQ) the composition is skewed to low complexity. Lysine 228 is subject to N6-acetyllysine. Residues 233–542 (QIKTRPRKIK…KEHKSKDETV (310 aa)) form a disordered region. Residues 244–256 (DGKEGIEEIDRHV) show a composition bias toward basic and acidic residues. Residues 257 to 285 (ERRRSRSPRRSLSPRRSPRRSRSRSHHRE) show a composition bias toward basic residues. Phosphoserine is present on residues serine 289, serine 291, serine 319, and serine 321. The segment covering 292-328 (FDRELEREKERQRLEREAKEREKERRRSRSIDRGLDR) has biased composition (basic and acidic residues). A coiled-coil region spans residues 293 to 322 (DRELEREKERQRLEREAKEREKERRRSRSI). A compositionally biased stretch (basic residues) spans 329–345 (RRSRSRERHRSRSRSRD). Basic and acidic residues predominate over residues 346-419 (RKGDRRDRDR…DRRHRDDKKE (74 aa)). A compositionally biased stretch (basic residues) spans 420 to 447 (SKKKHSRSRSRERKHRSRSRNAGKRSRS). Serine 445 carries the phosphoserine modification. Basic and acidic residues predominate over residues 448 to 465 (RSKDKSSRHKNESKEKAN). Phosphoserine occurs at positions 470, 472, and 478. Composition is skewed to basic and acidic residues over residues 478–491 (SVEK…PSRE) and 498–520 (RSQD…RQDH). Serine 523, serine 525, and serine 530 each carry phosphoserine. Residues 530-542 (SQEKEHKSKDETV) show a composition bias toward basic and acidic residues.

The protein belongs to the PRP38 family.

It localises to the nucleus. Its function is as follows. May be required for pre-mRNA splicing. The sequence is that of Pre-mRNA-splicing factor 38B (Prpf38b) from Mus musculus (Mouse).